Consider the following 51-residue polypeptide: Astexin-1 (51 aa).

The propeptide occupies 1–28 (MHTPIISETVQPKTAGLIVLGKASAETR). Positions 29–37 (GLSQGVEPD) form a cross-link, isoaspartyl glycine isopeptide (Gly-Asp).

In terms of processing, this lasso peptide is probably hydrolyzed to a linear form by the isopeptidase AtxE1, in vivo.

In terms of biological role, shows weak antimicrobial activity against its phylogenetic relative Caulobacter crescentus. Does not show activity against other bacteria tested (E.coli, Vibrio sp, Burkhoderia thailandensis, and Salmonella newport). The polypeptide is Astexin-1 (Asticcacaulis excentricus (strain ATCC 15261 / DSM 4724 / KCTC 12464 / NCIMB 9791 / VKM B-1370 / CB 48)).